The primary structure comprises 300 residues: Zinc finger CCCH-type antiviral protein 1-like (300 aa).

Alanine 2 carries the post-translational modification N-acetylalanine. Over residues 252 to 263 (NTDNSSPSTEHS) the composition is skewed to polar residues. The interval 252-300 (NTDNSSPSTEHSQGLEKQGVHAAGAAEAGPLASVPAQSAKKPCPVSCEK) is disordered. Residues 271–283 (VHAAGAAEAGPLA) show a composition bias toward low complexity.

The chain is Zinc finger CCCH-type antiviral protein 1-like (ZC3HAV1L) from Homo sapiens (Human).